We begin with the raw amino-acid sequence, 371 residues long: Dihydroorotate dehydrogenase (quinone) (371 aa).

Residues 79–83 and Thr103 contribute to the FMN site; that span reads AGFDK. Lys83 contributes to the substrate binding site. Substrate is bound at residue 128 to 132; the sequence is NRMGF. Residues Asn156 and Asn189 each contribute to the FMN site. Asn189 contacts substrate. Ser192 functions as the Nucleophile in the catalytic mechanism. Asn194 is a binding site for substrate. Positions 225 and 253 each coordinate FMN. 254–255 contributes to the substrate binding site; the sequence is NT. FMN-binding positions include Gly279, Gly308, and 329–330; that span reads YT.

Belongs to the dihydroorotate dehydrogenase family. Type 2 subfamily. Monomer. Requires FMN as cofactor.

The protein localises to the cell membrane. The catalysed reaction is (S)-dihydroorotate + a quinone = orotate + a quinol. The protein operates within pyrimidine metabolism; UMP biosynthesis via de novo pathway; orotate from (S)-dihydroorotate (quinone route): step 1/1. Its function is as follows. Catalyzes the conversion of dihydroorotate to orotate with quinone as electron acceptor. The sequence is that of Dihydroorotate dehydrogenase (quinone) from Corynebacterium glutamicum (strain R).